Here is a 77-residue protein sequence, read N- to C-terminus: Large ribosomal subunit protein eL14 (77 aa).

Belongs to the eukaryotic ribosomal protein eL14 family.

The chain is Large ribosomal subunit protein eL14 from Methanococcus maripaludis (strain C5 / ATCC BAA-1333).